A 342-amino-acid chain; its full sequence is Pre-mRNA-splicing factor 18 (342 aa).

This sequence belongs to the PRP18 family. In terms of assembly, interacts with the spliceosome. Part of a complex containing U4/U6 snRNPs.

The protein resides in the nucleus speckle. Participates in the second step of pre-mRNA splicing. The protein is Pre-mRNA-splicing factor 18 (prpf18) of Danio rerio (Zebrafish).